The following is a 1044-amino-acid chain: Translation initiation factor IF-2 (1044 aa).

The tract at residues 31 to 425 (VRSASSTVEP…RKSKRAKRQE (395 aa)) is disordered. 2 stretches are compositionally biased toward pro residues: residues 77–98 (GPAP…PQPA) and 106–116 (APAPAPAPRPA). Residues 117–148 (EPAANPAPAAPPAFQAPAPAPAERPAAAQRPA) are compositionally biased toward low complexity. Residues 168–185 (GGPGQGPRPGARPGGPGA) show a composition bias toward gly residues. A compositionally biased stretch (basic and acidic residues) spans 204–247 (GPGDRPERSERPDRGDRPQGDRPRSDRPQGERQQGDRPQGDRPG). Residues 285–304 (GGAPRPGNNPFASNQGMPRP) are compositionally biased toward low complexity. The segment covering 305-328 (QGGPRPTPAGPGGPRPGGPRPNPG) has biased composition (pro residues). Residues 329 to 338 (MMPARPTVGR) are compositionally biased toward low complexity. Positions 339 to 409 (PGAGPGAGRP…GTQGAFGRAG (71 aa)) are enriched in gly residues. The segment covering 413 to 422 (VRGRKSKRAK) has biased composition (basic residues). One can recognise a tr-type G domain in the interval 537 to 709 (ARPPVVTVMG…VLLTADASLD (173 aa)). Residues 546 to 553 (GHVDHGKT) are G1. 546–553 (GHVDHGKT) contacts GTP. The interval 571–575 (GITQH) is G2. Positions 596–599 (DTPG) are G3. GTP contacts are provided by residues 596–600 (DTPGH) and 650–653 (NKVD). A G4 region spans residues 650–653 (NKVD). Residues 686 to 688 (SAR) are G5.

The protein belongs to the TRAFAC class translation factor GTPase superfamily. Classic translation factor GTPase family. IF-2 subfamily.

Its subcellular location is the cytoplasm. In terms of biological role, one of the essential components for the initiation of protein synthesis. Protects formylmethionyl-tRNA from spontaneous hydrolysis and promotes its binding to the 30S ribosomal subunits. Also involved in the hydrolysis of GTP during the formation of the 70S ribosomal complex. In Kineococcus radiotolerans (strain ATCC BAA-149 / DSM 14245 / SRS30216), this protein is Translation initiation factor IF-2.